Reading from the N-terminus, the 201-residue chain is Large ribosomal subunit protein mL61 (201 aa).

Residues 87 to 118 (RDDKDAKPSSTPFPTSSADGSSPAPKPAQGER) form a disordered region. Positions 94-106 (PSSTPFPTSSADG) are enriched in polar residues.

It belongs to the mitochondrion-specific ribosomal protein mL61 family. As to quaternary structure, component of the mitochondrial large ribosomal subunit (mt-LSU). Mature N.crassa 74S mitochondrial ribosomes consist of a small (37S) and a large (54S) subunit. The 37S small subunit contains a 16S ribosomal RNA (16S mt-rRNA) and 32 different proteins. The 54S large subunit contains a 23S rRNA (23S mt-rRNA) and 42 different proteins.

It localises to the mitochondrion. Functionally, component of the mitochondrial ribosome (mitoribosome), a dedicated translation machinery responsible for the synthesis of mitochondrial genome-encoded proteins, including at least some of the essential transmembrane subunits of the mitochondrial respiratory chain. The mitoribosomes are attached to the mitochondrial inner membrane and translation products are cotranslationally integrated into the membrane. This chain is Large ribosomal subunit protein mL61 (mrp49), found in Neurospora crassa (strain ATCC 24698 / 74-OR23-1A / CBS 708.71 / DSM 1257 / FGSC 987).